The following is a 160-amino-acid chain: MKSLQKGFTLIELMIVVAIIGILAAFAIPAYNDYIARSQAAEGVSLADGLKVRIAENLQDGECKGPDADPQSGVVGNEDIGKYALAKIEGDYDASKTDAGAPNGCKVEITYGQGTAEGKISKLITGKKLVLDQLVNGSFIAGDGTDLADKFMPNAVKAKK.

The propeptide at 1 to 7 (MKSLQKG) is leader sequence. Position 8 is an N-methylphenylalanine (Phe8). The helical transmembrane segment at 8 to 28 (FTLIELMIVVAIIGILAAFAI) threads the bilayer. A disulfide bond links Cys63 and Cys105.

This sequence belongs to the N-Me-Phe pilin family. The pili are polar flexible filaments of about 5.4 nanometers diameter and 2.5 micrometers average length; they consist of only a single polypeptide chain arranged in a helical configuration of five subunits per turn in the assembled pilus.

It is found in the fimbrium. The protein resides in the membrane. Functionally, major component of the type IV fimbriae that plays an essential role in twitching motility, natural transformation, and protease secretion. This is Type IV major fimbrial protein FimA (fimA) from Dichelobacter nodosus (Bacteroides nodosus).